The sequence spans 1484 residues: Chromosome partition protein MukB (1484 aa).

Position 34 to 41 (34 to 41) interacts with ATP; sequence GGNGAGKS. Coiled-coil stretches lie at residues 338–415, 496–604, 781–805, 835–868, 903–1115, and 1206–1265; these read NLVQ…RAIQ, QTAR…ALAW, AARE…ATLS, EAEM…HYDQ, HDAQ…SAKA, and DDPV…LQAV. Residues 666–783 are flexible hinge; it reads PGGTDDARLT…AVPLFGRAAR (118 aa).

The protein belongs to the SMC family. MukB subfamily. Homodimerization via its hinge domain. Binds to DNA via its C-terminal region. Interacts, and probably forms a ternary complex, with MukE and MukF via its C-terminal region. The complex formation is stimulated by calcium or magnesium. Interacts with tubulin-related protein FtsZ.

It is found in the cytoplasm. Its subcellular location is the nucleoid. Functionally, plays a central role in chromosome condensation, segregation and cell cycle progression. Functions as a homodimer, which is essential for chromosome partition. Involved in negative DNA supercoiling in vivo, and by this means organize and compact chromosomes. May achieve or facilitate chromosome segregation by condensation DNA from both sides of a centrally located replisome during cell division. The polypeptide is Chromosome partition protein MukB (Sodalis glossinidius (strain morsitans)).